Reading from the N-terminus, the 571-residue chain is Proline--tRNA ligase (571 aa).

Belongs to the class-II aminoacyl-tRNA synthetase family. ProS type 1 subfamily. In terms of assembly, homodimer.

The protein resides in the cytoplasm. The catalysed reaction is tRNA(Pro) + L-proline + ATP = L-prolyl-tRNA(Pro) + AMP + diphosphate. Its function is as follows. Catalyzes the attachment of proline to tRNA(Pro) in a two-step reaction: proline is first activated by ATP to form Pro-AMP and then transferred to the acceptor end of tRNA(Pro). As ProRS can inadvertently accommodate and process non-cognate amino acids such as alanine and cysteine, to avoid such errors it has two additional distinct editing activities against alanine. One activity is designated as 'pretransfer' editing and involves the tRNA(Pro)-independent hydrolysis of activated Ala-AMP. The other activity is designated 'posttransfer' editing and involves deacylation of mischarged Ala-tRNA(Pro). The misacylated Cys-tRNA(Pro) is not edited by ProRS. The polypeptide is Proline--tRNA ligase (Shewanella baltica (strain OS155 / ATCC BAA-1091)).